Consider the following 126-residue polypeptide: Chemocyanin (126 aa).

The first 30 residues, 1–30, serve as a signal peptide directing secretion; sequence MAQGSGSAERALVLGVVLVFLVFNCEVAES. The region spanning 31–126 is the Phytocyanin domain; the sequence is VVYTVGDGGG…GGLKIAVTAA (96 aa). The Cu cation site is built by histidine 69, cysteine 109, and histidine 114. A disulfide bond links cysteine 82 and cysteine 115.

In terms of tissue distribution, strongly expressed in stigma and style and to a lesser extent in leaves, ovary and petals. Not detected in pollen tubes, mature anthers or roots.

Functionally, diffusible chemotropic factor that induces pollen tube chemotropism. The protein is Chemocyanin of Lilium longiflorum (Trumpet lily).